A 123-amino-acid polypeptide reads, in one-letter code: uncharacterized protein (123 aa).

This is an uncharacterized protein from Methanocaldococcus jannaschii (strain ATCC 43067 / DSM 2661 / JAL-1 / JCM 10045 / NBRC 100440) (Methanococcus jannaschii).